The following is a 547-amino-acid chain: Methionine--tRNA ligase (547 aa).

Residues 15-25 (PYANGSLHLGH) carry the 'HIGH' region motif. Residues Cys-146, Cys-149, Cys-159, and Cys-162 each contribute to the Zn(2+) site. The 'KMSKS' region signature appears at 332–336 (KMSKS). Position 335 (Lys-335) interacts with ATP.

The protein belongs to the class-I aminoacyl-tRNA synthetase family. MetG type 1 subfamily. As to quaternary structure, monomer. Zn(2+) is required as a cofactor.

It is found in the cytoplasm. It catalyses the reaction tRNA(Met) + L-methionine + ATP = L-methionyl-tRNA(Met) + AMP + diphosphate. Is required not only for elongation of protein synthesis but also for the initiation of all mRNA translation through initiator tRNA(fMet) aminoacylation. This Baumannia cicadellinicola subsp. Homalodisca coagulata protein is Methionine--tRNA ligase.